We begin with the raw amino-acid sequence, 542 residues long: Membrane protein insertase YidC (542 aa).

The helical transmembrane segment at 5-25 threads the bilayer; the sequence is TLLAVILSITVFYVFSLLFAP. Residues 33–64 are disordered; that stretch reads ESTGQAVSAPVSAGQPVAGGVQPSASAPSLPA. Over residues 54 to 64 the composition is skewed to low complexity; the sequence is QPSASAPSLPA. Transmembrane regions (helical) follow at residues 323–343, 345–365, 419–439, 463–483, and 500–520; these read LDLG…KYFY, YVGN…ALFF, LPML…MFSI, MLGL…TMFI, and MLAL…GLVL.

This sequence belongs to the OXA1/ALB3/YidC family. Type 1 subfamily. As to quaternary structure, interacts with the Sec translocase complex via SecD. Specifically interacts with transmembrane segments of nascent integral membrane proteins during membrane integration.

It is found in the cell inner membrane. Functionally, required for the insertion and/or proper folding and/or complex formation of integral membrane proteins into the membrane. Involved in integration of membrane proteins that insert both dependently and independently of the Sec translocase complex, as well as at least some lipoproteins. Aids folding of multispanning membrane proteins. In Pelobacter propionicus (strain DSM 2379 / NBRC 103807 / OttBd1), this protein is Membrane protein insertase YidC.